Consider the following 332-residue polypeptide: Ketol-acid reductoisomerase (NADP(+)) 2 (332 aa).

A KARI N-terminal Rossmann domain is found at 2-182 (AELFYDADAD…GGTRAGVIRT (181 aa)). Residues 25–28 (YGSQ), Ser51, Ser53, and 83–86 (DPIQ) each bind NADP(+). His108 is a catalytic residue. Gly134 contributes to the NADP(+) binding site. Residues 183–328 (TFTEETETDL…KELRKLMSWV (146 aa)) form the KARI C-terminal knotted domain. 4 residues coordinate Mg(2+): Asp191, Glu195, Glu227, and Glu231. Ser252 contacts substrate.

The protein belongs to the ketol-acid reductoisomerase family. Requires Mg(2+) as cofactor.

The catalysed reaction is (2R)-2,3-dihydroxy-3-methylbutanoate + NADP(+) = (2S)-2-acetolactate + NADPH + H(+). The enzyme catalyses (2R,3R)-2,3-dihydroxy-3-methylpentanoate + NADP(+) = (S)-2-ethyl-2-hydroxy-3-oxobutanoate + NADPH + H(+). Its pathway is amino-acid biosynthesis; L-isoleucine biosynthesis; L-isoleucine from 2-oxobutanoate: step 2/4. It participates in amino-acid biosynthesis; L-valine biosynthesis; L-valine from pyruvate: step 2/4. In terms of biological role, involved in the biosynthesis of branched-chain amino acids (BCAA). Catalyzes an alkyl-migration followed by a ketol-acid reduction of (S)-2-acetolactate (S2AL) to yield (R)-2,3-dihydroxy-isovalerate. In the isomerase reaction, S2AL is rearranged via a Mg-dependent methyl migration to produce 3-hydroxy-3-methyl-2-ketobutyrate (HMKB). In the reductase reaction, this 2-ketoacid undergoes a metal-dependent reduction by NADPH to yield (R)-2,3-dihydroxy-isovalerate. This Streptomyces coelicolor (strain ATCC BAA-471 / A3(2) / M145) protein is Ketol-acid reductoisomerase (NADP(+)) 2.